Reading from the N-terminus, the 942-residue chain is NBPF family member NBPF8 (942 aa).

Residues 89–130 (AEELRQYKVLVHSQERELTQLKEKLQEGRDASRSLNEHLQAL) are a coiled coil. The disordered stretch occupies residues 161 to 203 (KLSPENDEDEDEDVQVEEDEKVQKSSAPREVQKAEESKVPEDS). Over residues 165–180 (ENDEDEDEDVQVEEDE) the composition is skewed to acidic residues. One can recognise an Olduvai 1 domain in the interval 165-259 (ENDEDEDEDV…ECQDALNILS (95 aa)). Residues 190–201 (EVQKAEESKVPE) are compositionally biased toward basic and acidic residues. Residues 339–401 (KSMLRNERQF…LSLNEHLQAL (63 aa)) are a coiled coil. Olduvai domains follow at residues 436–528 (ENDN…HIIP), 529–617 (ENES…ATGP), 620–675 (SREL…VDMD), 676–767 (EIEK…PPCP), 770–843 (SREL…RSKK), and 844–904 (KRRR…RSVF). Disordered stretches follow at residues 451-474 (EKVQ…PEDS) and 528-566 (PENE…EGYS). Composition is skewed to acidic residues over residues 530–539 (NESDDEEEEE) and 550–562 (ESEE…ESWD). Basic residues predominate over residues 831–849 (GKGKIRRGRRSKKKRRRGR). A disordered region spans residues 831 to 863 (GKGKIRRGRRSKKKRRRGRKEGEEDQNPPCPRL).

It belongs to the NBPF family. Expressed in the mammary gland.

It localises to the cytoplasm. This is NBPF family member NBPF8 from Homo sapiens (Human).